Reading from the N-terminus, the 539-residue chain is Putative serine/threonine-protein kinase L670 (539 aa).

The 115-residue stretch at 1 to 115 (MSLFNNHPEL…ILKVFKFGLH (115 aa)) folds into the Cyclin N-terminal domain. A Protein kinase domain is found at 258 to 519 (MNVIEKLGIG…VLKIFSECFV (262 aa)). Residues 264-272 (LGIGSFGLV) and K285 each bind ATP. The active-site Proton acceptor is the D375.

The protein belongs to the protein kinase superfamily. Ser/Thr protein kinase family.

It catalyses the reaction L-seryl-[protein] + ATP = O-phospho-L-seryl-[protein] + ADP + H(+). It carries out the reaction L-threonyl-[protein] + ATP = O-phospho-L-threonyl-[protein] + ADP + H(+). The protein is Putative serine/threonine-protein kinase L670 of Acanthamoeba polyphaga mimivirus (APMV).